A 399-amino-acid polypeptide reads, in one-letter code: Lipoyl synthase, mitochondrial (399 aa).

Residues 1–30 constitute a mitochondrion transit peptide; it reads MRAVLELTRRRARNARFARARAVVGARARA. Residues 31–41 show a composition bias toward basic and acidic residues; it reads ADAQELRDDSK. Residues 31–58 form a disordered region; the sequence is ADAQELRDDSKGGSSVDKATSTAAEARE. Residues cysteine 131, cysteine 136, cysteine 142, cysteine 162, cysteine 166, cysteine 169, and serine 375 each coordinate [4Fe-4S] cluster. A Radical SAM core domain is found at 145-364; sequence GGDGKTATAT…QEIAEEMGFL (220 aa).

Belongs to the radical SAM superfamily. Lipoyl synthase family. Requires [4Fe-4S] cluster as cofactor.

Its subcellular location is the mitochondrion. It carries out the reaction [[Fe-S] cluster scaffold protein carrying a second [4Fe-4S](2+) cluster] + N(6)-octanoyl-L-lysyl-[protein] + 2 oxidized [2Fe-2S]-[ferredoxin] + 2 S-adenosyl-L-methionine + 4 H(+) = [[Fe-S] cluster scaffold protein] + N(6)-[(R)-dihydrolipoyl]-L-lysyl-[protein] + 4 Fe(3+) + 2 hydrogen sulfide + 2 5'-deoxyadenosine + 2 L-methionine + 2 reduced [2Fe-2S]-[ferredoxin]. It functions in the pathway protein modification; protein lipoylation via endogenous pathway; protein N(6)-(lipoyl)lysine from octanoyl-[acyl-carrier-protein]: step 2/2. Catalyzes the radical-mediated insertion of two sulfur atoms into the C-6 and C-8 positions of the octanoyl moiety bound to the lipoyl domains of lipoate-dependent enzymes, thereby converting the octanoylated domains into lipoylated derivatives. In Ostreococcus lucimarinus (strain CCE9901), this protein is Lipoyl synthase, mitochondrial.